The chain runs to 133 residues: DNA-directed RNA polymerases I and III subunit RPAC2 (133 aa).

Methionine 1 carries the N-acetylmethionine modification. The disordered stretch occupies residues 1 to 22; that stretch reads MEEDQELERKMSGVKTSMAEGE.

Belongs to the archaeal Rpo11/eukaryotic RPB11/RPC19 RNA polymerase subunit family. As to quaternary structure, component of the RNA polymerase I and RNA polymerase III complexes consisting of at least 13 and 17 subunits, respectively. The transcriptionally active RNA polymerase III complex consists of a ten-subunit horseshoe-shaped catalytic core composed of POLR3A/RPC1, POLR3B/RPC2, POLR1C/RPAC1, POLR1D/RPAC2, POLR3K/RPC10, POLR2E/RPABC1, POLR2F/RPABC2, POLR2H/RPABC3, POLR2K/RPABC4 and POLR2L/RPABC5; a mobile stalk composed of two subunits POLR3H/RPC8 and CRCP/RPC9, protruding from the core and functioning primarily in transcription initiation; and additional subunits homologous to general transcription factors of the RNA polymerase II machinery, POLR3C/RPC3-POLR3F/RPC6-POLR3G/RPC7 heterotrimer required for transcription initiation and POLR3D/RPC4-POLR3E/RPC5 heterodimer involved in both transcription initiation and termination.

The protein resides in the nucleus. DNA-dependent RNA polymerase catalyzes the transcription of DNA into RNA using the four ribonucleoside triphosphates as substrates. Common component of RNA polymerases I and III which synthesize ribosomal RNA precursor pre-rRNA and short non-coding RNAs including 5S rRNA, snRNAs, tRNAs and miRNAs, respectively. The protein is DNA-directed RNA polymerases I and III subunit RPAC2 (POLR1D) of Bos taurus (Bovine).